A 125-amino-acid polypeptide reads, in one-letter code: Large ribosomal subunit protein bL12 (125 aa).

The protein belongs to the bacterial ribosomal protein bL12 family. Homodimer. Part of the ribosomal stalk of the 50S ribosomal subunit. Forms a multimeric L10(L12)X complex, where L10 forms an elongated spine to which 2 to 4 L12 dimers bind in a sequential fashion. Binds GTP-bound translation factors.

Functionally, forms part of the ribosomal stalk which helps the ribosome interact with GTP-bound translation factors. Is thus essential for accurate translation. The sequence is that of Large ribosomal subunit protein bL12 from Sinorhizobium medicae (strain WSM419) (Ensifer medicae).